The sequence spans 407 residues: Putative glycosyltransferase YtcC (407 aa).

This sequence belongs to the glycosyltransferase group 1 family. Glycosyltransferase 4 subfamily.

The protein is Putative glycosyltransferase YtcC (ytcC) of Bacillus subtilis (strain 168).